The primary structure comprises 548 residues: Thermolysin (548 aa).

The first 28 residues, 1–28, serve as a signal peptide directing secretion; sequence MKMKMKLASFGLAAGLAAQVFLPYNALA. Residues 29-232 constitute a propeptide, activation peptide; that stretch reads STEHVTWNQQ…DAAKPGDVKS (204 aa). The Ca(2+) site is built by Asp289, Asp291, Gln293, and Asp370. His374 is a Zn(2+) binding site. Glu375 is an active-site residue. Residues His378 and Glu398 each contribute to the Zn(2+) site. Residues Glu409, Asn415, Asp417, Glu419, Glu422, Tyr425, Thr426, Ile429, and Asp432 each contribute to the Ca(2+) site. His463 (proton donor) is an active-site residue.

Belongs to the peptidase M4 family. Ca(2+) is required as a cofactor. Zn(2+) serves as cofactor.

The protein resides in the secreted. It carries out the reaction Preferential cleavage: Xaa-|-Leu &gt; Xaa-|-Phe.. In terms of biological role, extracellular zinc metalloprotease. This chain is Thermolysin (npr), found in Bacillus thermoproteolyticus.